We begin with the raw amino-acid sequence, 282 residues long: 4-diphosphocytidyl-2-C-methyl-D-erythritol kinase (282 aa).

The active site involves Lys-9. Residue 98-108 participates in ATP binding; the sequence is PMGGGLGGGSS. Asp-140 is a catalytic residue.

The protein belongs to the GHMP kinase family. IspE subfamily. As to quaternary structure, homodimer.

The catalysed reaction is 4-CDP-2-C-methyl-D-erythritol + ATP = 4-CDP-2-C-methyl-D-erythritol 2-phosphate + ADP + H(+). It functions in the pathway isoprenoid biosynthesis; isopentenyl diphosphate biosynthesis via DXP pathway; isopentenyl diphosphate from 1-deoxy-D-xylulose 5-phosphate: step 3/6. Its function is as follows. Catalyzes the phosphorylation of the position 2 hydroxy group of 4-diphosphocytidyl-2C-methyl-D-erythritol. In Salmonella schwarzengrund (strain CVM19633), this protein is 4-diphosphocytidyl-2-C-methyl-D-erythritol kinase.